We begin with the raw amino-acid sequence, 229 residues long: Peptidase E (229 aa).

Catalysis depends on charge relay system residues S120, D135, and H157.

It belongs to the peptidase S51 family.

It localises to the cytoplasm. It carries out the reaction Dipeptidase E catalyzes the hydrolysis of dipeptides Asp-|-Xaa. It does not act on peptides with N-terminal Glu, Asn or Gln, nor does it cleave isoaspartyl peptides.. In terms of biological role, hydrolyzes dipeptides containing N-terminal aspartate residues. May play a role in allowing the cell to use peptide aspartate to spare carbon otherwise required for the synthesis of the aspartate family of amino acids. This Salmonella typhi protein is Peptidase E.